The sequence spans 255 residues: uncharacterized protein (255 aa).

2 disordered regions span residues 112-145 (CWPG…PSPG) and 157-183 (GLAE…PDAQ).

This is an uncharacterized protein from Rhodospirillum rubrum.